A 291-amino-acid polypeptide reads, in one-letter code: Polyamine aminopropyltransferase (291 aa).

One can recognise a PABS domain in the interval 5-245 (PGPISLIEPL…YAVNYILGSL (241 aa)). Residue glutamine 36 participates in S-methyl-5'-thioadenosine binding. Spermidine is bound by residues histidine 67 and glutamate 91. Residues aspartate 111 and 143–144 (DG) contribute to the S-methyl-5'-thioadenosine site. Catalysis depends on aspartate 164, which acts as the Proton acceptor.

Belongs to the spermidine/spermine synthase family. In terms of assembly, homodimer or homotetramer.

It localises to the cytoplasm. The catalysed reaction is S-adenosyl 3-(methylsulfanyl)propylamine + putrescine = S-methyl-5'-thioadenosine + spermidine + H(+). Its pathway is amine and polyamine biosynthesis; spermidine biosynthesis; spermidine from putrescine: step 1/1. In terms of biological role, catalyzes the irreversible transfer of a propylamine group from the amino donor S-adenosylmethioninamine (decarboxy-AdoMet) to putrescine (1,4-diaminobutane) to yield spermidine. The sequence is that of Polyamine aminopropyltransferase from Pyrobaculum neutrophilum (strain DSM 2338 / JCM 9278 / NBRC 100436 / V24Sta) (Thermoproteus neutrophilus).